The primary structure comprises 551 residues: DNA mismatch repair protein MutL (551 aa).

Belongs to the DNA mismatch repair MutL/HexB family.

This protein is involved in the repair of mismatches in DNA. It is required for dam-dependent methyl-directed DNA mismatch repair. May act as a 'molecular matchmaker', a protein that promotes the formation of a stable complex between two or more DNA-binding proteins in an ATP-dependent manner without itself being part of a final effector complex. This chain is DNA mismatch repair protein MutL, found in Thermosipho melanesiensis (strain DSM 12029 / CIP 104789 / BI429).